Consider the following 248-residue polypeptide: Aspartate/glutamate leucyltransferase (248 aa).

The protein belongs to the R-transferase family. Bpt subfamily.

The protein resides in the cytoplasm. The enzyme catalyses N-terminal L-glutamyl-[protein] + L-leucyl-tRNA(Leu) = N-terminal L-leucyl-L-glutamyl-[protein] + tRNA(Leu) + H(+). It carries out the reaction N-terminal L-aspartyl-[protein] + L-leucyl-tRNA(Leu) = N-terminal L-leucyl-L-aspartyl-[protein] + tRNA(Leu) + H(+). In terms of biological role, functions in the N-end rule pathway of protein degradation where it conjugates Leu from its aminoacyl-tRNA to the N-termini of proteins containing an N-terminal aspartate or glutamate. The chain is Aspartate/glutamate leucyltransferase from Methylorubrum extorquens (strain PA1) (Methylobacterium extorquens).